A 433-amino-acid polypeptide reads, in one-letter code: 23S rRNA (uracil(1939)-C(5))-methyltransferase RlmD (433 aa).

One can recognise a TRAM domain in the interval 1 to 53; that stretch reads MPVAVIESLDHEGRGVAHVDGKVVFVEGALAGEQVEYTVYRQRPSYDLAEATR. Residues Cys66, Cys72, Cys75, and Cys154 each coordinate [4Fe-4S] cluster. 6 residues coordinate S-adenosyl-L-methionine: Gln263, Phe292, Asn297, Glu313, Asn341, and Asp362. Cys389 (nucleophile) is an active-site residue.

Belongs to the class I-like SAM-binding methyltransferase superfamily. RNA M5U methyltransferase family. RlmD subfamily.

The enzyme catalyses uridine(1939) in 23S rRNA + S-adenosyl-L-methionine = 5-methyluridine(1939) in 23S rRNA + S-adenosyl-L-homocysteine + H(+). In terms of biological role, catalyzes the formation of 5-methyl-uridine at position 1939 (m5U1939) in 23S rRNA. This is 23S rRNA (uracil(1939)-C(5))-methyltransferase RlmD from Aromatoleum aromaticum (strain DSM 19018 / LMG 30748 / EbN1) (Azoarcus sp. (strain EbN1)).